The following is a 104-amino-acid chain: L-rhamnose mutarotase (104 aa).

Residue Tyr-18 coordinates substrate. The active-site Proton donor is the His-22. Residues Tyr-41 and 76–77 (WW) contribute to the substrate site.

This sequence belongs to the rhamnose mutarotase family. As to quaternary structure, homodimer.

It localises to the cytoplasm. The catalysed reaction is alpha-L-rhamnose = beta-L-rhamnose. It participates in carbohydrate metabolism; L-rhamnose metabolism. Its function is as follows. Involved in the anomeric conversion of L-rhamnose. In Acidiphilium cryptum (strain JF-5), this protein is L-rhamnose mutarotase.